A 1297-amino-acid chain; its full sequence is Phosphoribosylformylglycinamidine synthase (1297 aa).

The segment at 305 to 324 (FPGAATGSGGEIRDEGATGR) is disordered. ATP is bound at residue 307–318 (GAATGSGGEIRD). Mg(2+)-binding residues include aspartate 679, glutamate 718, asparagine 722, and aspartate 886. Serine 888 serves as a coordination point for ATP. The 254-residue stretch at 1044–1297 (IAVLREQGVN…LFRNARVFFK (254 aa)) folds into the Glutamine amidotransferase type-1 domain. Residue cysteine 1137 is the Nucleophile of the active site. Catalysis depends on residues histidine 1262 and glutamate 1264.

This sequence in the N-terminal section; belongs to the FGAMS family. As to quaternary structure, monomer.

The protein resides in the cytoplasm. The catalysed reaction is N(2)-formyl-N(1)-(5-phospho-beta-D-ribosyl)glycinamide + L-glutamine + ATP + H2O = 2-formamido-N(1)-(5-O-phospho-beta-D-ribosyl)acetamidine + L-glutamate + ADP + phosphate + H(+). It functions in the pathway purine metabolism; IMP biosynthesis via de novo pathway; 5-amino-1-(5-phospho-D-ribosyl)imidazole from N(2)-formyl-N(1)-(5-phospho-D-ribosyl)glycinamide: step 1/2. Functionally, phosphoribosylformylglycinamidine synthase involved in the purines biosynthetic pathway. Catalyzes the ATP-dependent conversion of formylglycinamide ribonucleotide (FGAR) and glutamine to yield formylglycinamidine ribonucleotide (FGAM) and glutamate. This Mannheimia succiniciproducens (strain KCTC 0769BP / MBEL55E) protein is Phosphoribosylformylglycinamidine synthase.